A 238-amino-acid polypeptide reads, in one-letter code: UDP-2,3-diacylglucosamine hydrolase (238 aa).

Residues Asp8, His10, Asp41, Asn78, and His113 each coordinate Mn(2+). Residue 78 to 79 (NR) participates in substrate binding. 5 residues coordinate substrate: Asp121, Ser159, Asn163, Lys166, and His194. Residues His194 and His196 each contribute to the Mn(2+) site.

Belongs to the LpxH family. Mn(2+) serves as cofactor.

It localises to the cell inner membrane. It carries out the reaction UDP-2-N,3-O-bis[(3R)-3-hydroxytetradecanoyl]-alpha-D-glucosamine + H2O = 2-N,3-O-bis[(3R)-3-hydroxytetradecanoyl]-alpha-D-glucosaminyl 1-phosphate + UMP + 2 H(+). Its pathway is glycolipid biosynthesis; lipid IV(A) biosynthesis; lipid IV(A) from (3R)-3-hydroxytetradecanoyl-[acyl-carrier-protein] and UDP-N-acetyl-alpha-D-glucosamine: step 4/6. Functionally, hydrolyzes the pyrophosphate bond of UDP-2,3-diacylglucosamine to yield 2,3-diacylglucosamine 1-phosphate (lipid X) and UMP by catalyzing the attack of water at the alpha-P atom. Involved in the biosynthesis of lipid A, a phosphorylated glycolipid that anchors the lipopolysaccharide to the outer membrane of the cell. The protein is UDP-2,3-diacylglucosamine hydrolase of Shewanella halifaxensis (strain HAW-EB4).